We begin with the raw amino-acid sequence, 430 residues long: Phosphomethylpyrimidine synthase (430 aa).

Residues Asn-67, Met-96, Tyr-125, His-161, 183–185, 224–227, and Glu-263 each bind substrate; these read SRG and DALR. Residue His-267 coordinates Zn(2+). Tyr-290 is a binding site for substrate. His-331 provides a ligand contact to Zn(2+). Positions 406, 409, and 413 each coordinate [4Fe-4S] cluster.

It belongs to the ThiC family. In terms of assembly, homodimer. Requires [4Fe-4S] cluster as cofactor.

It catalyses the reaction 5-amino-1-(5-phospho-beta-D-ribosyl)imidazole + S-adenosyl-L-methionine = 4-amino-2-methyl-5-(phosphooxymethyl)pyrimidine + CO + 5'-deoxyadenosine + formate + L-methionine + 3 H(+). The protein operates within cofactor biosynthesis; thiamine diphosphate biosynthesis. Functionally, catalyzes the synthesis of the hydroxymethylpyrimidine phosphate (HMP-P) moiety of thiamine from aminoimidazole ribotide (AIR) in a radical S-adenosyl-L-methionine (SAM)-dependent reaction. The protein is Phosphomethylpyrimidine synthase of Campylobacter jejuni subsp. doylei (strain ATCC BAA-1458 / RM4099 / 269.97).